Consider the following 404-residue polypeptide: Phosphopentomutase (404 aa).

Mn(2+)-binding residues include aspartate 10, aspartate 303, histidine 308, aspartate 344, histidine 345, and histidine 356.

It belongs to the phosphopentomutase family. It depends on Mn(2+) as a cofactor.

The protein localises to the cytoplasm. The catalysed reaction is 2-deoxy-alpha-D-ribose 1-phosphate = 2-deoxy-D-ribose 5-phosphate. It catalyses the reaction alpha-D-ribose 1-phosphate = D-ribose 5-phosphate. It functions in the pathway carbohydrate degradation; 2-deoxy-D-ribose 1-phosphate degradation; D-glyceraldehyde 3-phosphate and acetaldehyde from 2-deoxy-alpha-D-ribose 1-phosphate: step 1/2. Its function is as follows. Isomerase that catalyzes the conversion of deoxy-ribose 1-phosphate (dRib-1-P) and ribose 1-phosphate (Rib-1-P) to deoxy-ribose 5-phosphate (dRib-5-P) and ribose 5-phosphate (Rib-5-P), respectively. This Shewanella baltica (strain OS155 / ATCC BAA-1091) protein is Phosphopentomutase.